We begin with the raw amino-acid sequence, 276 residues long: SKA complex subunit 1 homolog (276 aa).

Residues 48–78 are a coiled coil; it reads VDVSLTAMEAQLQAVRRRLQEEREAFPKAKK.

It belongs to the SKA1 family.

In Oryza sativa subsp. indica (Rice), this protein is SKA complex subunit 1 homolog.